The chain runs to 564 residues: Poly(U)-binding-splicing factor PUF60 (564 aa).

The inhibits homodimerization stretch occupies residues 1–521; that stretch reads MATATIALQV…EDAEIIVKIF (521 aa). A disordered region spans residues 37–61; it reads KWKPPQGTESIKMENGQSTGTKLGL. Residue Lys48 forms a Glycyl lysine isopeptide (Lys-Gly) (interchain with G-Cter in SUMO2) linkage. Thr65 carries the phosphothreonine modification. The interval 82-564 is inhibits transcriptional repression, interaction with ERCC3 and apoptosis induction; sequence QSIKSVLVKQ…ERFDNSDLSA (483 aa). A Glycyl lysine isopeptide (Lys-Gly) (interchain with G-Cter in SUMO2) cross-link involves residue Lys85. Ser117 carries the phosphoserine modification. 2 consecutive RRM domains span residues 134-212 and 231-309; these read CRVY…RPSN and NRIY…KAVT. Ser249 carries the phosphoserine modification. Lys256 is subject to N6-acetyllysine. Residue Thr319 is modified to Phosphothreonine. The interval 421 to 442 is disordered; the sequence is KKEKEEEELFPESERPEMLSEQ. Residue Lys424 forms a Glycyl lysine isopeptide (Lys-Gly) (interchain with G-Cter in SUMO2) linkage. Residues 432–442 show a composition bias toward basic and acidic residues; it reads ESERPEMLSEQ. Residue Lys459 is modified to N6-acetyllysine. Lys463 is covalently cross-linked (Glycyl lysine isopeptide (Lys-Gly) (interchain with G-Cter in SUMO2)). Residues 467–554 form the RRM 3; atypical domain; sequence TVMVLRNMVD…RKVVAEVYDQ (88 aa).

The protein belongs to the RRM half pint family. In terms of assembly, homodimer. Associates with the spliceosome. Found in a complex with RO60 and Y5 RNA. Found in a complex with FUBP1 and far upstream element (FUSE) DNA segment. Interacts directly with ERCC3. Interacts with CDK7 and GTF2H1. Interacts with SRSF11/P54. Interacts with ARGLU1; interaction may be involved in ARGLU1-mediated modulation of alternative splicing.

It is found in the nucleus. In terms of biological role, DNA- and RNA-binding protein, involved in several nuclear processes such as pre-mRNA splicing, apoptosis and transcription regulation. In association with FUBP1 regulates MYC transcription at the P2 promoter through the core-TFIIH basal transcription factor. Acts as a transcriptional repressor through the core-TFIIH basal transcription factor. Represses FUBP1-induced transcriptional activation but not basal transcription. Decreases ERCC3 helicase activity. Is also involved in pre-mRNA splicing. Promotes splicing of an intron with weak 3'-splice site and pyrimidine tract in a cooperative manner with U2AF2. Involved in apoptosis induction when overexpressed in HeLa cells. Modulates alternative splicing of several mRNAs. Binds to relaxed DNA of active promoter regions. Binds to the pyrimidine tract and 3'-splice site regions of pre-mRNA; binding is enhanced in presence of U2AF2. Binds to Y5 RNA in association with RO60. Binds to poly(U) RNA. In Rattus norvegicus (Rat), this protein is Poly(U)-binding-splicing factor PUF60.